The primary structure comprises 165 residues: UPF0179 protein Igni_1272 (165 aa).

It belongs to the UPF0179 family.

This Ignicoccus hospitalis (strain KIN4/I / DSM 18386 / JCM 14125) protein is UPF0179 protein Igni_1272.